Reading from the N-terminus, the 161-residue chain is Phosphopantetheine adenylyltransferase (161 aa).

S8 contacts substrate. Residues 8–9 and H16 contribute to the ATP site; that span reads SF. K40, T72, and R86 together coordinate substrate. ATP is bound by residues 87–89, E97, and 122–128; these read GLR and HSFLSSS.

This sequence belongs to the bacterial CoaD family. In terms of assembly, homohexamer. Requires Mg(2+) as cofactor.

It localises to the cytoplasm. The enzyme catalyses (R)-4'-phosphopantetheine + ATP + H(+) = 3'-dephospho-CoA + diphosphate. It functions in the pathway cofactor biosynthesis; coenzyme A biosynthesis; CoA from (R)-pantothenate: step 4/5. Its function is as follows. Reversibly transfers an adenylyl group from ATP to 4'-phosphopantetheine, yielding dephospho-CoA (dPCoA) and pyrophosphate. This Gloeobacter violaceus (strain ATCC 29082 / PCC 7421) protein is Phosphopantetheine adenylyltransferase.